The chain runs to 132 residues: Large ribosomal subunit protein uL14 (132 aa).

Belongs to the universal ribosomal protein uL14 family. As to quaternary structure, part of the 50S ribosomal subunit. Forms a cluster with proteins L3 and L24e, part of which may contact the 16S rRNA in 2 intersubunit bridges.

Binds to 23S rRNA. Forms part of two intersubunit bridges in the 70S ribosome. In Halobacterium salinarum (strain ATCC 29341 / DSM 671 / R1), this protein is Large ribosomal subunit protein uL14.